Consider the following 541-residue polypeptide: Testis-specific chromodomain protein Y 2 (541 aa).

The region spanning 6–66 (FEVEAIVDKR…RQTEKQKKLT (61 aa)) is the Chromo domain. The disordered stretch occupies residues 72 to 104 (RIFSNNARRRTSRSTKANYSKNSPKTPVTDKHH). Residues 87-97 (KANYSKNSPKT) show a composition bias toward polar residues.

As to expression, testis specific.

It is found in the nucleus. The enzyme catalyses L-lysyl-[protein] + acetyl-CoA = N(6)-acetyl-L-lysyl-[protein] + CoA + H(+). Its function is as follows. May have histone acetyltransferase activity. This chain is Testis-specific chromodomain protein Y 2 (CDY2A), found in Homo sapiens (Human).